We begin with the raw amino-acid sequence, 644 residues long: Chaperone protein DnaK (644 aa).

T199 carries the post-translational modification Phosphothreonine; by autocatalysis. The segment at 602 to 644 (IYAKKSSEGQTAQGQTQSQESTKPAEEGVVDAEFEEVKEEDKK) is disordered. Residues 609-623 (EGQTAQGQTQSQEST) are compositionally biased toward polar residues. A compositionally biased stretch (acidic residues) spans 629 to 644 (GVVDAEFEEVKEEDKK).

This sequence belongs to the heat shock protein 70 family.

Its function is as follows. Acts as a chaperone. This Legionella pneumophila (strain Lens) protein is Chaperone protein DnaK.